Reading from the N-terminus, the 507-residue chain is Extracellular elastase (507 aa).

The first 28 residues, 1–28 (MKNFSKFALTSIAALTVASPLVNTEVDA), serve as a signal peptide directing secretion. Positions 29-207 (KDKVSATQNI…VVDKLNMIKE (179 aa)) are excised as a propeptide. D347 contacts Ca(2+). Zn(2+) is bound at residue H351. E352 is an active-site residue. H355 and E375 together coordinate Zn(2+). Residues D386, E388, D389, L391, E394, Y397, T398, V401, and D404 each coordinate Ca(2+). Residue H435 is the Proton donor of the active site.

It belongs to the peptidase M4 family. Ca(2+) serves as cofactor. Zn(2+) is required as a cofactor.

The protein localises to the secreted. In terms of biological role, protease that has a low substrate specificity. Glucagon is preferentially cleaved between aromatic (Phe) and hydrophobic (Val) amino acids. Hydrolyzes casein and elastin. This is Extracellular elastase (sepA) from Staphylococcus epidermidis (strain ATCC 12228 / FDA PCI 1200).